Reading from the N-terminus, the 196-residue chain is FMN-dependent NADH:quinone oxidoreductase (196 aa).

S10 provides a ligand contact to FMN.

The protein belongs to the azoreductase type 1 family. Homodimer. Requires FMN as cofactor.

It carries out the reaction 2 a quinone + NADH + H(+) = 2 a 1,4-benzosemiquinone + NAD(+). It catalyses the reaction N,N-dimethyl-1,4-phenylenediamine + anthranilate + 2 NAD(+) = 2-(4-dimethylaminophenyl)diazenylbenzoate + 2 NADH + 2 H(+). Its function is as follows. Quinone reductase that provides resistance to thiol-specific stress caused by electrophilic quinones. Also exhibits azoreductase activity. Catalyzes the reductive cleavage of the azo bond in aromatic azo compounds to the corresponding amines. The sequence is that of FMN-dependent NADH:quinone oxidoreductase from Cereibacter sphaeroides (strain KD131 / KCTC 12085) (Rhodobacter sphaeroides).